The primary structure comprises 263 residues: tRNA pseudouridine synthase A (263 aa).

Catalysis depends on aspartate 57, which acts as the Nucleophile. Tyrosine 115 provides a ligand contact to substrate.

This sequence belongs to the tRNA pseudouridine synthase TruA family. In terms of assembly, homodimer.

The catalysed reaction is uridine(38/39/40) in tRNA = pseudouridine(38/39/40) in tRNA. Functionally, formation of pseudouridine at positions 38, 39 and 40 in the anticodon stem and loop of transfer RNAs. The sequence is that of tRNA pseudouridine synthase A from Buchnera aphidicola subsp. Schizaphis graminum (strain Sg).